We begin with the raw amino-acid sequence, 404 residues long: Protrudin (404 aa).

Residues 1-25 form a disordered region; it reads MQSSDRDLSGPEASPSVMPEVLSEC. The Cytoplasmic segment spans residues 1 to 63; the sequence is MQSSDRDLSG…LKDAGDGVRY (63 aa). The interval 1 to 92 is sufficient for homooligomerization; sequence MQSSDRDLSG…LFLTLNEGAW (92 aa). The segment at 1–205 is sufficient for localization to endoplasmic reticulum tubular network and for interactions with REEP1, REEP5, ATL1, ATL2, ATL3 and SPAST; the sequence is MQSSDRDLSG…LYLLPLCWVL (205 aa). The necessary for interaction with RAB11A and function in neurite outgrowth stretch occupies residues 51-64; that stretch reads LEPLKDAGDGVRYL. Residues 64–85 form a helical membrane-spanning segment; sequence LLRWQMPLCSLLTCLGLNILFL. Residues 86–90 lie on the Lumenal side of the membrane; the sequence is TLNEG. Residues 91 to 109 form a helical membrane-spanning segment; sequence AWYSVGALIISVPALLGYL. Residues 110-187 lie on the Cytoplasmic side of the membrane; it reads QEVCRAQLPE…NPVVSSQFYG (78 aa). Positions 188–208 form an intramembrane region, helical; sequence ALLGMVCMLYLLPLCWVLALL. At 209 to 404 the chain is on the cytoplasmic side; sequence NSTLFLGNGE…CASCNQTLSK (196 aa). The interval 259–299 is disordered; that stretch reads DSTPAPTPTEDLTPGSVEEAEEAEPDEEFKDAIEEDDEGTP. The necessary for interaction with KIF5A stretch occupies residues 271-354; sequence TPGSVEEAEE…GCAATFSVLK (84 aa). Residues 276–299 show a composition bias toward acidic residues; sequence EEAEEAEPDEEFKDAIEEDDEGTP. A necessary for interaction with VAPA region spans residues 286–292; sequence EFKDAIE. An FYVE-type zinc finger spans residues 337–403; it reads TNNFGNCAGC…VCASCNQTLS (67 aa). Zn(2+) is bound by residues C343, C346, C359, C362, C367, C370, C395, and C398.

Can form homooligomers (monomers, dimers and tetramers). Interacts with FKBP8; may negatively regulate ZFYVE27 phosphorylation. Interacts with VAPA (via MSP domain); may regulate ZFYVE27 retention in the endoplasmic reticulum and its function in cell projections formation. Interacts with VAPB (via MSP domain). Interacts with RAB11A (GDP-bound form); regulates RAB11A. Interacts with RAB11B (GDP-bound form), REEP1, REEP5, ATL1, ATL2, ATL3, SPAST, SURF4, KIF5A, KIF5B, KIF5C and RTN3. In terms of processing, phosphorylated. Phosphorylation is induced by NGF through the MAPK/ERK pathway and modulates interaction with RAB11A.

The protein resides in the recycling endosome membrane. It localises to the endoplasmic reticulum membrane. Its subcellular location is the cell projection. The protein localises to the growth cone membrane. Key regulator of RAB11-dependent vesicular trafficking during neurite extension through polarized membrane transport. Promotes axonal elongation and contributes to the establishment of neuronal cell polarity. Involved in nerve growth factor-induced neurite formation in VAPA-dependent manner. Contributes to both the formation and stabilization of the tubular ER network. Involved in ER morphogenesis by regulating the sheet-to-tubule balance and possibly the density of tubule interconnections. Acts as an adapter protein that facilitates the interaction of KIF5A with VAPA, VAPB, SURF4, RAB11A, RAB11B and RTN3 and the ZFYVE27-KIF5A complex contributes to the transport of these proteins in neurons. Can induce formation of neurite-like membrane protrusions in non-neuronal cells in a KIF5A/B-dependent manner. This chain is Protrudin (Zfyve27), found in Rattus norvegicus (Rat).